The primary structure comprises 661 residues: uncharacterized protein (661 aa).

The interval 25 to 52 (LLPSEPPVGDMNNEDSDTNTSITQSPTN) is disordered. A compositionally biased stretch (polar residues) spans 42–52 (TNTSITQSPTN). In terms of domain architecture, SANT spans 246 to 297 (SMPDIWNEEQHSIFVQQFILHGKKFGKIAEAVPGKNSKECVLHYYLTKRTTD). Disordered stretches follow at residues 306–329 (TKTKGRRRKKLLPSQRGGKKKSKG), 478–499 (YYEPKLEQHSSSKRNSISTRKE), 548–570 (PMKMPLTPRRASTGPRPRPTFQL), and 604–633 (RIDELSVEDQEHTTHSSHTTSDINAFPNSQ). Residues 308–328 (TKGRRRKKLLPSQRGGKKKSK) are compositionally biased toward basic residues. The segment covering 478–487 (YYEPKLEQHS) has biased composition (basic and acidic residues). The span at 604–617 (RIDELSVEDQEHTT) shows a compositional bias: basic and acidic residues.

The protein resides in the nucleus. This is an uncharacterized protein from Schizosaccharomyces pombe (strain 972 / ATCC 24843) (Fission yeast).